Here is a 72-residue protein sequence, read N- to C-terminus: Bowman-Birk type trypsin inhibitor (72 aa).

Disulfide bonds link cysteine 12–cysteine 66, cysteine 13–cysteine 28, cysteine 16–cysteine 62, cysteine 18–cysteine 26, cysteine 36–cysteine 43, cysteine 40–cysteine 55, and cysteine 45–cysteine 53.

Belongs to the Bowman-Birk serine protease inhibitor family.

This chain is Bowman-Birk type trypsin inhibitor, found in Vigna radiata var. radiata (Mung bean).